We begin with the raw amino-acid sequence, 751 residues long: uncharacterized protein (751 aa).

The segment at 73 to 169 is disordered; it reads FGVVHSHTPK…PVLIDDDTGE (97 aa). Residues 96-109 show a composition bias toward low complexity; that stretch reads ATSTRRSATAQRAA. Positions 111-120 are enriched in polar residues; that stretch reads LKSSPVDQWS.

This is an uncharacterized protein from Invertebrate iridescent virus 3 (IIV-3).